A 454-amino-acid chain; its full sequence is Protein disulfide-isomerase TMX3 (454 aa).

The first 24 residues, Met-1–Cys-24, serve as a signal peptide directing secretion. Residues Lys-25 to Arg-128 enclose the Thioredoxin domain. Topologically, residues Lys-25–Pro-375 are lumenal. Active-site nucleophile residues include Cys-53 and Cys-56. A disulfide bridge links Cys-53 with Cys-56. N-linked (GlcNAc...) asparagine glycosylation is found at Asn-258 and Asn-313. A helical membrane pass occupies residues Leu-376 to Ile-396. Residues Tyr-397 to Asp-454 lie on the Cytoplasmic side of the membrane. The disordered stretch occupies residues Val-412–Asp-454. A compositionally biased stretch (basic and acidic residues) spans Glu-444–Asp-454. Residues Lys-451–Asp-454 carry the Di-lysine motif motif.

Belongs to the protein disulfide isomerase family.

It is found in the endoplasmic reticulum membrane. It catalyses the reaction Catalyzes the rearrangement of -S-S- bonds in proteins.. In terms of biological role, probable disulfide isomerase, which participates in the folding of proteins containing disulfide bonds. May act as a dithiol oxidase. Acts as a regulator of endoplasmic reticulum-mitochondria contact sites via its ability to regulate redox signals. This Pongo abelii (Sumatran orangutan) protein is Protein disulfide-isomerase TMX3 (TMX3).